We begin with the raw amino-acid sequence, 190 residues long: Corticoliberin (190 aa).

An N-terminal signal peptide occupies residues 1 to 24 (MRLRLLVSVGVLLVALLPSPPCRA). The propeptide occupies 25-147 (LLSRGPIPGA…QEAPAARKRR (123 aa)). Disordered stretches follow at residues 33 to 57 (GARQ…QEPQ) and 116 to 151 (RRPF…SQEP). Alanine amide is present on alanine 188.

Belongs to the sauvagine/corticotropin-releasing factor/urotensin I family. As to quaternary structure, interacts (via C-terminus) with CRFR1 (via N-terminal extracellular domain). Produced by the hypothalamus.

It localises to the secreted. In terms of biological role, hormone regulating the release of corticotropin from pituitary gland. Induces NLRP6 in intestinal epithelial cells, hence may influence gut microbiota profile. The protein is Corticoliberin (CRH) of Bos taurus (Bovine).